A 206-amino-acid polypeptide reads, in one-letter code: Large ribosomal subunit protein uL4 (206 aa).

Belongs to the universal ribosomal protein uL4 family. As to quaternary structure, part of the 50S ribosomal subunit.

Functionally, one of the primary rRNA binding proteins, this protein initially binds near the 5'-end of the 23S rRNA. It is important during the early stages of 50S assembly. It makes multiple contacts with different domains of the 23S rRNA in the assembled 50S subunit and ribosome. In terms of biological role, forms part of the polypeptide exit tunnel. The polypeptide is Large ribosomal subunit protein uL4 (Bradyrhizobium diazoefficiens (strain JCM 10833 / BCRC 13528 / IAM 13628 / NBRC 14792 / USDA 110)).